A 606-amino-acid chain; its full sequence is (R)-limonene synthase 1, chloroplastic (606 aa).

A chloroplast-targeting transit peptide spans 1 to 32 (MSSCINPSTLVTSVNAFKCLPLATNKAAIRIM). Asp-342 and Asp-346 together coordinate Mn(2+). Asp-342, Asp-346, Arg-484, Asp-487, and Lys-503 together coordinate substrate. Residues 342–346 (DDIYD) carry the DDXXD motif motif. Asp-487 is a binding site for Mn(2+).

It belongs to the terpene synthase family. It depends on Mg(2+) as a cofactor. Mn(2+) serves as cofactor.

Its subcellular location is the plastid. The protein localises to the chloroplast. The catalysed reaction is (2E)-geranyl diphosphate = (4R)-limonene + diphosphate. The chain is (R)-limonene synthase 1, chloroplastic from Citrus limon (Lemon).